The following is an 86-amino-acid chain: Putative regulatory protein BBR47_37350 (86 aa).

It belongs to the RemA family.

This is Putative regulatory protein BBR47_37350 from Brevibacillus brevis (strain 47 / JCM 6285 / NBRC 100599).